Reading from the N-terminus, the 262-residue chain is Probable dihydroorotate dehydrogenase B (NAD(+)), electron transfer subunit (262 aa).

The region spanning 4-97 is the FAD-binding FR-type domain; it reads VKPIPAEVVE…RGPYGKPFEV (94 aa). Positions 217, 222, 225, and 234 each coordinate [2Fe-2S] cluster.

The protein belongs to the PyrK family. In terms of assembly, heterotetramer of 2 PyrK and 2 PyrD type B subunits. [2Fe-2S] cluster serves as cofactor. It depends on FAD as a cofactor.

It functions in the pathway pyrimidine metabolism; UMP biosynthesis via de novo pathway; orotate from (S)-dihydroorotate (NAD(+) route): step 1/1. Its function is as follows. Responsible for channeling the electrons from the oxidation of dihydroorotate from the FMN redox center in the PyrD type B subunit to the ultimate electron acceptor NAD(+). The chain is Probable dihydroorotate dehydrogenase B (NAD(+)), electron transfer subunit from Methanopyrus kandleri (strain AV19 / DSM 6324 / JCM 9639 / NBRC 100938).